A 163-amino-acid polypeptide reads, in one-letter code: MVTKKSKKAWPWLWLSVLVILLDQLSKYLANHFLSLGHPVKILPFLNFTLNYNTGAAFSFLGTENGWQIIFFAAISFVVSIFLILWLSRTSRSEIMMSLGLSLIIGGALGNFIDRLRWSYVTDFIDFHIKDWHFATFNVADSAICVGVFLLIVYMLLTPSSKP.

4 helical membrane passes run 9–29 (AWPW…SKYL), 42–62 (ILPF…SFLG), 67–87 (WQII…ILWL), and 93–113 (SEIM…GNFI). Active-site residues include D123 and D141. A helical transmembrane segment spans residues 137–157 (FNVADSAICVGVFLLIVYMLL).

This sequence belongs to the peptidase A8 family.

The protein localises to the cell inner membrane. The enzyme catalyses Release of signal peptides from bacterial membrane prolipoproteins. Hydrolyzes -Xaa-Yaa-Zaa-|-(S,diacylglyceryl)Cys-, in which Xaa is hydrophobic (preferably Leu), and Yaa (Ala or Ser) and Zaa (Gly or Ala) have small, neutral side chains.. The protein operates within protein modification; lipoprotein biosynthesis (signal peptide cleavage). This protein specifically catalyzes the removal of signal peptides from prolipoproteins. This Coxiella burnetii (strain Dugway 5J108-111) protein is Lipoprotein signal peptidase.